A 504-amino-acid chain; its full sequence is Glycerol kinase (504 aa).

Threonine 16 serves as a coordination point for ADP. The ATP site is built by threonine 16 and threonine 17. Sn-glycerol 3-phosphate is bound at residue threonine 16. ADP is bound at residue arginine 20. Sn-glycerol 3-phosphate contacts are provided by arginine 86, glutamate 87, tyrosine 138, and aspartate 247. Positions 86, 87, 138, 247, and 248 each coordinate glycerol. Positions 269 and 316 each coordinate ADP. The ATP site is built by threonine 269, glycine 316, glutamine 320, and glycine 417. Glycine 417 and asparagine 421 together coordinate ADP.

It belongs to the FGGY kinase family.

The enzyme catalyses glycerol + ATP = sn-glycerol 3-phosphate + ADP + H(+). Its pathway is polyol metabolism; glycerol degradation via glycerol kinase pathway; sn-glycerol 3-phosphate from glycerol: step 1/1. Its activity is regulated as follows. Inhibited by fructose 1,6-bisphosphate (FBP). In terms of biological role, key enzyme in the regulation of glycerol uptake and metabolism. Catalyzes the phosphorylation of glycerol to yield sn-glycerol 3-phosphate. The chain is Glycerol kinase from Trichodesmium erythraeum (strain IMS101).